The chain runs to 151 residues: Aspartate 1-decarboxylase (151 aa).

Catalysis depends on S26, which acts as the Schiff-base intermediate with substrate; via pyruvic acid. S26 bears the Pyruvic acid (Ser) mark. T58 contacts substrate. Y59 serves as the catalytic Proton donor. Residue G74–A76 coordinates substrate.

Belongs to the PanD family. As to quaternary structure, heterooctamer of four alpha and four beta subunits. It depends on pyruvate as a cofactor. Is synthesized initially as an inactive proenzyme, which is activated by self-cleavage at a specific serine bond to produce a beta-subunit with a hydroxyl group at its C-terminus and an alpha-subunit with a pyruvoyl group at its N-terminus.

The protein resides in the cytoplasm. It carries out the reaction L-aspartate + H(+) = beta-alanine + CO2. The protein operates within cofactor biosynthesis; (R)-pantothenate biosynthesis; beta-alanine from L-aspartate: step 1/1. Its function is as follows. Catalyzes the pyruvoyl-dependent decarboxylation of aspartate to produce beta-alanine. The protein is Aspartate 1-decarboxylase of Crocosphaera subtropica (strain ATCC 51142 / BH68) (Cyanothece sp. (strain ATCC 51142)).